We begin with the raw amino-acid sequence, 134 residues long: Small ribosomal subunit protein uS8 (134 aa).

This sequence belongs to the universal ribosomal protein uS8 family. As to quaternary structure, part of the 30S ribosomal subunit. Contacts proteins S5 and S12.

In terms of biological role, one of the primary rRNA binding proteins, it binds directly to 16S rRNA central domain where it helps coordinate assembly of the platform of the 30S subunit. This Thermosipho melanesiensis (strain DSM 12029 / CIP 104789 / BI429) protein is Small ribosomal subunit protein uS8.